Reading from the N-terminus, the 132-residue chain is Protein NrdI (132 aa).

Belongs to the NrdI family.

In terms of biological role, probably involved in ribonucleotide reductase function. The chain is Protein NrdI from Bartonella henselae (strain ATCC 49882 / DSM 28221 / CCUG 30454 / Houston 1) (Rochalimaea henselae).